Reading from the N-terminus, the 256-residue chain is Probable aquaporin TIP4-2 (256 aa).

The next 5 helical transmembrane spans lie at 25 to 45 (AVAG…ASTI), 59 to 79 (AVTA…TAGF), 86 to 108 (LNPA…SALY), 146 to 166 (GVAA…ATIL), and 178 to 198 (PLLT…LTGA). The NPA 1 motif lies at 87 to 89 (NPA). An NPA 2 motif is present at residues 201–203 (NPA). The helical transmembrane segment at 220–240 (VYWVGPLAGGPLAVVAYELLF) threads the bilayer.

Belongs to the MIP/aquaporin (TC 1.A.8) family. TIP (TC 1.A.8.10) subfamily. In terms of tissue distribution, expressed in roots, leaves and anthers.

It localises to the vacuole membrane. Functionally, aquaporins facilitate the transport of water and small neutral solutes across cell membranes. May be involved in transport from the vacuolar compartment to the cytoplasm. This Oryza sativa subsp. japonica (Rice) protein is Probable aquaporin TIP4-2 (TIP4-2).